We begin with the raw amino-acid sequence, 167 residues long: Intermembrane phospholipid transport system binding protein MlaD (167 aa).

At 1–6 the chain is on the cytoplasmic side; it reads MRQTIK. The helical; Signal-anchor for type II membrane protein transmembrane segment at 7 to 27 threads the bilayer; it reads YEFWVGLFLLLGIGALVFLGL. Topologically, residues 28–167 are periplasmic; it reads RVANVQGFAE…GNEKSESTEQ (140 aa). The MCE/MlaD stretch occupies residues 40–118; sequence SYTVTATFDN…GEQYIALTMG (79 aa).

The protein belongs to the MlaD family. In terms of assembly, the complex is composed of two ATP-binding proteins (MlaF), two transmembrane proteins (MlaE), two cytoplasmic solute-binding proteins (MlaB) and six periplasmic solute-binding proteins (MlaD).

The protein resides in the cell inner membrane. Functionally, part of the ABC transporter complex MlaFEDB, which is involved in a phospholipid transport pathway that maintains lipid asymmetry in the outer membrane by retrograde trafficking of phospholipids from the outer membrane to the inner membrane. MlaD functions in substrate binding with strong affinity for phospholipids and modulates ATP hydrolytic activity of the complex. In Haemophilus influenzae (strain ATCC 51907 / DSM 11121 / KW20 / Rd), this protein is Intermembrane phospholipid transport system binding protein MlaD.